The sequence spans 287 residues: Orotidine 5'-phosphate decarboxylase (287 aa).

Lysine 97 (proton donor) is an active-site residue.

It belongs to the OMP decarboxylase family. Type 2 subfamily.

The catalysed reaction is orotidine 5'-phosphate + H(+) = UMP + CO2. The protein operates within pyrimidine metabolism; UMP biosynthesis via de novo pathway; UMP from orotate: step 2/2. In Clostridium perfringens (strain ATCC 13124 / DSM 756 / JCM 1290 / NCIMB 6125 / NCTC 8237 / Type A), this protein is Orotidine 5'-phosphate decarboxylase.